A 173-amino-acid chain; its full sequence is Putative C-type lectin protein FPV198 (173 aa).

The C-type lectin domain maps to 50 to 169; it reads GMSGWVQINN…CNKKHTGICF (120 aa).

This is Putative C-type lectin protein FPV198 from Vertebrata (FPV).